The chain runs to 268 residues: tRNA pseudouridine synthase A (268 aa).

Asp52 acts as the Nucleophile in catalysis. Tyr110 is a binding site for substrate.

Belongs to the tRNA pseudouridine synthase TruA family. As to quaternary structure, homodimer.

It carries out the reaction uridine(38/39/40) in tRNA = pseudouridine(38/39/40) in tRNA. Its function is as follows. Formation of pseudouridine at positions 38, 39 and 40 in the anticodon stem and loop of transfer RNAs. The sequence is that of tRNA pseudouridine synthase A from Prochlorococcus marinus (strain MIT 9312).